Here is a 273-residue protein sequence, read N- to C-terminus: Orotidine 5'-phosphate decarboxylase (273 aa).

K96 (proton donor) is an active-site residue.

It belongs to the OMP decarboxylase family. Type 2 subfamily.

The catalysed reaction is orotidine 5'-phosphate + H(+) = UMP + CO2. It participates in pyrimidine metabolism; UMP biosynthesis via de novo pathway; UMP from orotate: step 2/2. This Flavobacterium johnsoniae (strain ATCC 17061 / DSM 2064 / JCM 8514 / BCRC 14874 / CCUG 350202 / NBRC 14942 / NCIMB 11054 / UW101) (Cytophaga johnsonae) protein is Orotidine 5'-phosphate decarboxylase.